The chain runs to 135 residues: Putative pre-16S rRNA nuclease (135 aa).

This sequence belongs to the YqgF nuclease family.

It localises to the cytoplasm. In terms of biological role, could be a nuclease involved in processing of the 5'-end of pre-16S rRNA. The protein is Putative pre-16S rRNA nuclease of Buchnera aphidicola subsp. Acyrthosiphon pisum (strain 5A).